Reading from the N-terminus, the 304-residue chain is Nod factor export ATP-binding protein I (304 aa).

The region spanning Ile6–Tyr236 is the ABC transporter domain. Residue Gly38–Thr45 participates in ATP binding.

Belongs to the ABC transporter superfamily. Lipooligosaccharide exporter (TC 3.A.1.102) family. In terms of assembly, the complex is composed of two ATP-binding proteins (NodI) and two transmembrane proteins (NodJ).

The protein resides in the cell inner membrane. Its function is as follows. Part of the ABC transporter complex NodIJ involved in the export of the nodulation factors (Nod factors), the bacterial signal molecules that induce symbiosis and subsequent nodulation induction. Nod factors are LCO (lipo-chitin oligosaccharide), a modified beta-1,4-linked N-acetylglucosamine oligosaccharide. This subunit is responsible for energy coupling to the transport system. The polypeptide is Nod factor export ATP-binding protein I (Burkholderia thailandensis (strain ATCC 700388 / DSM 13276 / CCUG 48851 / CIP 106301 / E264)).